A 291-amino-acid chain; its full sequence is Ribosomal RNA small subunit methyltransferase I (291 aa).

This sequence belongs to the methyltransferase superfamily. RsmI family.

The protein localises to the cytoplasm. It carries out the reaction cytidine(1402) in 16S rRNA + S-adenosyl-L-methionine = 2'-O-methylcytidine(1402) in 16S rRNA + S-adenosyl-L-homocysteine + H(+). In terms of biological role, catalyzes the 2'-O-methylation of the ribose of cytidine 1402 (C1402) in 16S rRNA. In Neisseria meningitidis serogroup B (strain ATCC BAA-335 / MC58), this protein is Ribosomal RNA small subunit methyltransferase I.